The sequence spans 506 residues: Ent-kaurenoic acid oxidase (506 aa).

Residues 11–31 form a helical membrane-spanning segment; that stretch reads AWAAGDLWVLAAAVVAGVVLV. Cys451 is a binding site for heme.

Belongs to the cytochrome P450 family. It depends on heme as a cofactor. As to expression, expressed in roots and panicles. Expressed at low levels in vegetative shoot apices, leaf sheaths, leaf blades and stems.

The protein resides in the endoplasmic reticulum membrane. The enzyme catalyses ent-kaur-16-en-19-oate + 3 reduced [NADPH--hemoprotein reductase] + 3 O2 = gibberellin A12 + 3 oxidized [NADPH--hemoprotein reductase] + 4 H2O + 4 H(+). It carries out the reaction ent-kaur-16-en-19-oate + reduced [NADPH--hemoprotein reductase] + O2 = ent-7alpha-hydroxykaur-16-en-19-oate + oxidized [NADPH--hemoprotein reductase] + H2O + H(+). It catalyses the reaction ent-7alpha-hydroxykaur-16-en-19-oate + reduced [NADPH--hemoprotein reductase] + O2 = gibberellin A12 aldehyde + oxidized [NADPH--hemoprotein reductase] + 2 H2O + H(+). The catalysed reaction is gibberellin A12 aldehyde + reduced [NADPH--hemoprotein reductase] + O2 = gibberellin A12 + oxidized [NADPH--hemoprotein reductase] + H2O + 2 H(+). Its pathway is plant hormone biosynthesis; gibberellin biosynthesis. Its function is as follows. Involved in gibberellin (GA) biosynthesis. Catalyzes three successive oxidations of ent-kaurenoic acid giving gibberellin 12 (GA12), a key step in GAs biosynthesis. GAs, which are involved many processes, including stem elongation, play a central role in plant development. Required for pollen germination and elongation. This is Ent-kaurenoic acid oxidase from Oryza sativa subsp. japonica (Rice).